The following is a 295-amino-acid chain: Acetaldehyde dehydrogenase 2 (295 aa).

NAD(+) is bound at residue 17–20; that stretch reads TGNI. Cys132 serves as the catalytic Acyl-thioester intermediate. Residues 164-172 and Asn275 contribute to the NAD(+) site; that span reads SVGPASRAN.

Belongs to the acetaldehyde dehydrogenase family.

It catalyses the reaction acetaldehyde + NAD(+) + CoA = acetyl-CoA + NADH + H(+). The polypeptide is Acetaldehyde dehydrogenase 2 (Salinispora arenicola (strain CNS-205)).